The following is a 226-amino-acid chain: Ribonuclease 3 (226 aa).

The 123-residue stretch at 7 to 129 (LPRLCRTLGY…IIGAVYLDAD (123 aa)) folds into the RNase III domain. Glutamate 42 contributes to the Mg(2+) binding site. The active site involves aspartate 46. Mg(2+) is bound by residues aspartate 115 and glutamate 118. Residue glutamate 118 is part of the active site. One can recognise a DRBM domain in the interval 156-226 (DAKTLLQEYL…AAQVLELLNQ (71 aa)).

The protein belongs to the ribonuclease III family. As to quaternary structure, homodimer. Mg(2+) serves as cofactor.

The protein resides in the cytoplasm. It carries out the reaction Endonucleolytic cleavage to 5'-phosphomonoester.. Functionally, digests double-stranded RNA. Involved in the processing of primary rRNA transcript to yield the immediate precursors to the large and small rRNAs (23S and 16S). Processes some mRNAs, and tRNAs when they are encoded in the rRNA operon. Processes pre-crRNA and tracrRNA of type II CRISPR loci if present in the organism. This is Ribonuclease 3 from Shewanella amazonensis (strain ATCC BAA-1098 / SB2B).